A 245-amino-acid chain; its full sequence is 5'-nucleotidase SurE (245 aa).

Positions 8, 9, 39, and 97 each coordinate a divalent metal cation.

The protein belongs to the SurE nucleotidase family. A divalent metal cation is required as a cofactor.

Its subcellular location is the cytoplasm. The enzyme catalyses a ribonucleoside 5'-phosphate + H2O = a ribonucleoside + phosphate. Functionally, nucleotidase that shows phosphatase activity on nucleoside 5'-monophosphates. This Clostridium kluyveri (strain NBRC 12016) protein is 5'-nucleotidase SurE.